The primary structure comprises 265 residues: Histone H1 (265 aa).

The segment covering 1–27 (MATEEPIVAVETVPEPIVTEPTTITEP) has biased composition (low complexity). Disordered stretches follow at residues 1 to 66 (MATE…PTYE), 131 to 226 (AAKK…TTPG), and 242 to 265 (VKSVKAKSVKSPVKKVSVKRGGRK). The span at 29–42 (VPEKEEPKAEVEKT) shows a compositional bias: basic and acidic residues. Over residues 43–55 (KKAKGSKPKKASK) the composition is skewed to basic residues. Residues 61–130 (SHPTYEEMIK…KVKGSFKLSA (70 aa)) form the H15 domain. Over residues 140–171 (PKAKTAAKAKSVKAKPAAKPKAKAVVKPKVAS) the composition is skewed to basic residues. The span at 186–202 (KPKTVAAKTKPTAAKPK) shows a compositional bias: low complexity. A compositionally biased stretch (basic residues) spans 203 to 215 (AVVKPKSKVKPAK). A compositionally biased stretch (low complexity) spans 216-226 (VAKTSVKTTPG).

It belongs to the histone H1/H5 family.

Its subcellular location is the nucleus. It localises to the chromosome. In terms of biological role, histones H1 are necessary for the condensation of nucleosome chains into higher-order structures. The polypeptide is Histone H1 (Pisum sativum (Garden pea)).